The following is an 847-amino-acid chain: Leucine--tRNA ligase (847 aa).

The 'HIGH' region signature appears at 41-51; the sequence is PYPSGRIHMGH. A 'KMSKS' region motif is present at residues 619–623; sequence KMSKS. Residue lysine 622 participates in ATP binding.

The protein belongs to the class-I aminoacyl-tRNA synthetase family.

The protein localises to the cytoplasm. It catalyses the reaction tRNA(Leu) + L-leucine + ATP = L-leucyl-tRNA(Leu) + AMP + diphosphate. The polypeptide is Leucine--tRNA ligase (Cereibacter sphaeroides (strain ATCC 17023 / DSM 158 / JCM 6121 / CCUG 31486 / LMG 2827 / NBRC 12203 / NCIMB 8253 / ATH 2.4.1.) (Rhodobacter sphaeroides)).